The following is a 65-amino-acid chain: Small ribosomal subunit protein bS21 (65 aa).

This sequence belongs to the bacterial ribosomal protein bS21 family.

The protein is Small ribosomal subunit protein bS21 of Chlorobium limicola (strain DSM 245 / NBRC 103803 / 6330).